The following is a 299-amino-acid chain: Tyrosine recombinase XerC (299 aa).

The region spanning 1–85 (MEQHLDAYCM…AVRGFYKYLN (85 aa)) is the Core-binding (CB) domain. A Tyr recombinase domain is found at 106 to 285 (RLPKTLDTDR…DFQHLATVYD (180 aa)). Catalysis depends on residues R146, K170, H237, R240, and H263. The active-site O-(3'-phospho-DNA)-tyrosine intermediate is Y272.

It belongs to the 'phage' integrase family. XerC subfamily. As to quaternary structure, forms a cyclic heterotetrameric complex composed of two molecules of XerC and two molecules of XerD.

The protein resides in the cytoplasm. Its function is as follows. Site-specific tyrosine recombinase, which acts by catalyzing the cutting and rejoining of the recombining DNA molecules. The XerC-XerD complex is essential to convert dimers of the bacterial chromosome into monomers to permit their segregation at cell division. It also contributes to the segregational stability of plasmids. The sequence is that of Tyrosine recombinase XerC from Pseudomonas syringae pv. tomato (strain ATCC BAA-871 / DC3000).